The following is a 443-amino-acid chain: ATP-dependent protease ATPase subunit HslU (443 aa).

Residues Val18 and Gly60–Glu65 contribute to the ATP site. The disordered stretch occupies residues Leu136–Leu158. Positions Arg148 to Gln157 are enriched in polar residues. ATP is bound by residues Asp256, Glu321, and Arg393.

The protein belongs to the ClpX chaperone family. HslU subfamily. A double ring-shaped homohexamer of HslV is capped on each side by a ring-shaped HslU homohexamer. The assembly of the HslU/HslV complex is dependent on binding of ATP.

Its subcellular location is the cytoplasm. In terms of biological role, ATPase subunit of a proteasome-like degradation complex; this subunit has chaperone activity. The binding of ATP and its subsequent hydrolysis by HslU are essential for unfolding of protein substrates subsequently hydrolyzed by HslV. HslU recognizes the N-terminal part of its protein substrates and unfolds these before they are guided to HslV for hydrolysis. In Marinobacter nauticus (strain ATCC 700491 / DSM 11845 / VT8) (Marinobacter aquaeolei), this protein is ATP-dependent protease ATPase subunit HslU.